A 454-amino-acid chain; its full sequence is Carbon catabolite repressor protein 4 homolog 5 (454 aa).

The disordered stretch occupies residues 1–76; sequence MSGYERKNTT…SLRRRRRTKE (76 aa). Over residues 31-41 the composition is skewed to basic and acidic residues; it reads VYEKSNRKESI. The segment covering 61–75 has biased composition (basic residues); the sequence is VRHSKSSLRRRRRTK. Position 153 (Glu-153) interacts with Mg(2+).

The protein belongs to the CCR4/nocturin family. As to quaternary structure, component of the CCR4-NOT complex, at least composed of CRR4 and CAF1 proteins. Requires Mg(2+) as cofactor.

It is found in the nucleus. Its subcellular location is the cytoplasm. The enzyme catalyses Exonucleolytic cleavage of poly(A) to 5'-AMP.. Acts as a catalytic component of the CCR4-NOT core complex, which in the nucleus seems to be a general transcription factor, and in the cytoplasm the major mRNA deadenylase involved in mRNA turnover. This Arabidopsis thaliana (Mouse-ear cress) protein is Carbon catabolite repressor protein 4 homolog 5 (CCR4-5).